Consider the following 260-residue polypeptide: MSDPITLNVGGKLYTTSLATLTSFPDSMLGAMFSGKMPTKRDSQGNCFIDRDGKVFRYILNFLRTSHLDLPEDFQEMGLLRREADFYQVQPLIEALQEKEVELSKAEKNAMLNITLKQRVQTVHFTVREAPQIYSLSSSSMEVFNANIFSTSCLFLKLLGSKLLYCSNGNLSSITSHLQDPNHLTLDWVANVEGLPEEEYTKQNLKRLWVVPANKQINSFQVFVEEVLKIALSDGFCIDSSHPHALDFMNNKIIRLIRYR.

One can recognise a BTB domain in the interval 3-72 (DPITLNVGGK…LRTSHLDLPE (70 aa)). Residues 88 to 112 (QVQPLIEALQEKEVELSKAEKNAML) are a coiled coil.

As to quaternary structure, homopentamer. Interacts with KCTD11; KCTD21 and KCTD11 may associate in pentameric assemblies. Interacts (via BTB domain) with CUL3; indicative for a participation in a BCR (BTB-CUL3-RBX1) E3 ubiquitin-protein ligase complex. In terms of tissue distribution, highly expressed in cerebellum and brain. Expressed in adult cerebellum (at protein level).

It functions in the pathway protein modification; protein ubiquitination. Its function is as follows. Probable substrate-specific adapter of a BCR (BTB-CUL3-RBX1) E3 ubiquitin-protein ligase complex mediating the ubiquitination and subsequent proteasomal degradation of target proteins. Promotes the ubiquitination of HDAC1. Can function as antagonist of the Hedgehog pathway by affecting the nuclear transfer of transcription factor GLI1; the function probably occurs via HDAC1 down-regulation, keeping GLI1 acetylated and inactive. Inhibits cell growth and tumorigenicity of medulloblastoma (MDB). This chain is BTB/POZ domain-containing protein KCTD21 (Kctd21), found in Mus musculus (Mouse).